The sequence spans 225 residues: PKHD-type hydroxylase YbiX (225 aa).

A Fe2OG dioxygenase domain is found at Thr78–Ser177. The Fe cation site is built by His96, Asp98, and His158. 2-oxoglutarate is bound at residue Arg168.

It depends on Fe(2+) as a cofactor. The cofactor is L-ascorbate.

The sequence is that of PKHD-type hydroxylase YbiX from Shigella dysenteriae serotype 1 (strain Sd197).